The following is a 344-amino-acid chain: MNEFKPLLGKVATGASLTRDEAAYVFDKMMSGEATPSQMGALLMGLRVRGETVEEIAGAVSVMRSKMLSVEAPSEAVDVVGTGGDASGSYNISTCASFIVAGAGVPVAKHGNRALSSKSGAADVLAALGVRIDLDPAGISRCIAEAGIGFMFAPSHHPAMKHVGPTRVEMGTRTIFNLLGPLSNPAGVTRQMVGVFAKSWIVPLAEVLRTLGSQKAFVVHGSDGLDEITISGGTDIAVLDEGRIHTFTIMPEDVGLKRHPAEDLKGGDAVHNAKALRTVLDGAEGAYRDVSLFNAAAALVVAGRAKDLKEGVEMARVSLDTGSARARLEHLVAVSEKLAPEAAQ.

5-phospho-alpha-D-ribose 1-diphosphate-binding positions include G81, 84–85 (GD), S89, 91–94 (NIST), 109–117 (KHGNRALSS), and A121. Residue G81 participates in anthranilate binding. Residue S93 participates in Mg(2+) binding. Anthranilate is bound at residue N112. R167 provides a ligand contact to anthranilate. Residues D226 and E227 each coordinate Mg(2+).

It belongs to the anthranilate phosphoribosyltransferase family. As to quaternary structure, homodimer. Mg(2+) serves as cofactor.

The catalysed reaction is N-(5-phospho-beta-D-ribosyl)anthranilate + diphosphate = 5-phospho-alpha-D-ribose 1-diphosphate + anthranilate. The protein operates within amino-acid biosynthesis; L-tryptophan biosynthesis; L-tryptophan from chorismate: step 2/5. Catalyzes the transfer of the phosphoribosyl group of 5-phosphorylribose-1-pyrophosphate (PRPP) to anthranilate to yield N-(5'-phosphoribosyl)-anthranilate (PRA). This is Anthranilate phosphoribosyltransferase from Xanthobacter autotrophicus (strain ATCC BAA-1158 / Py2).